We begin with the raw amino-acid sequence, 201 residues long: Ribonuclease HII (201 aa).

Residues 15–201 (QRVAGVDEVG…FRPVRRFLEA (187 aa)) form the RNase H type-2 domain. Residues D21, E22, and D113 each contribute to the a divalent metal cation site.

Belongs to the RNase HII family. Requires Mn(2+) as cofactor. Mg(2+) serves as cofactor.

The protein resides in the cytoplasm. It carries out the reaction Endonucleolytic cleavage to 5'-phosphomonoester.. Its function is as follows. Endonuclease that specifically degrades the RNA of RNA-DNA hybrids. This Nitrosococcus oceani (strain ATCC 19707 / BCRC 17464 / JCM 30415 / NCIMB 11848 / C-107) protein is Ribonuclease HII.